Here is a 424-residue protein sequence, read N- to C-terminus: Proline--tRNA ligase (424 aa).

The protein belongs to the class-II aminoacyl-tRNA synthetase family. ProS type 2 subfamily. As to quaternary structure, homodimer.

The protein localises to the cytoplasm. The catalysed reaction is tRNA(Pro) + L-proline + ATP = L-prolyl-tRNA(Pro) + AMP + diphosphate. Functionally, catalyzes the attachment of proline to tRNA(Pro) in a two-step reaction: proline is first activated by ATP to form Pro-AMP and then transferred to the acceptor end of tRNA(Pro). This chain is Proline--tRNA ligase, found in Ehrlichia chaffeensis (strain ATCC CRL-10679 / Arkansas).